We begin with the raw amino-acid sequence, 161 residues long: Small ribosomal subunit protein bS16 (161 aa).

The segment at 114–161 (EGGPTTEATKPKKKSPAKKAKGGEGDADAAAEKVEASAEGEQTESAES) is disordered. Over residues 124 to 133 (PKKKSPAKKA) the composition is skewed to basic residues.

Belongs to the bacterial ribosomal protein bS16 family.

This Mycobacterium marinum (strain ATCC BAA-535 / M) protein is Small ribosomal subunit protein bS16.